Consider the following 706-residue polypeptide: D-(-)-3-hydroxybutyrate oligomer hydrolase (706 aa).

The N-terminal stretch at 1-32 (MTTTSKNCLTLTSIAAAVAAVLVLSACGGGSA) is a signal peptide. S311 functions as the Charge relay system in the catalytic mechanism.

The protein belongs to the D-(-)-3-hydroxybutyrate oligomer hydrolase family.

It is found in the secreted. The catalysed reaction is (3R)-hydroxybutanoate dimer + H2O = 2 (R)-3-hydroxybutanoate + H(+). The protein operates within lipid metabolism; butanoate metabolism. Participates in the degradation of poly-3-hydroxybutyrate (PHB). It works downstream of poly(3-hydroxybutyrate) depolymerase, hydrolyzing D(-)-3-hydroxybutyrate oligomers of various length (3HB-oligomers) into 3HB-monomers. This chain is D-(-)-3-hydroxybutyrate oligomer hydrolase, found in Polaromonas sp. (strain JS666 / ATCC BAA-500).